The chain runs to 559 residues: Leucine-rich repeat-containing protein 71 (559 aa).

The span at 1-18 (MSSEQSAPGASPRAPRPG) shows a compositional bias: low complexity. Positions 1–56 (MSSEQSAPGASPRAPRPGTQKSSGAVTKKGERAAKEKPATVLPPVGEEEPKSPEEY) are disordered. Over residues 28–38 (KKGERAAKEKP) the composition is skewed to basic and acidic residues. LRR repeat units follow at residues 172-193 (NLWK…LPLC), 196-216 (TLRK…HKLM), 221-241 (TIAH…QLLG), 253-266 (TLVS…HIGD), and 281-302 (SLLW…KLAE). Composition is skewed to basic and acidic residues over residues 324–348 (KGTQ…REKS) and 380–391 (KSWELAKKEEKL). The tract at residues 324–427 (KGTQERSRSP…PEQKPSRAKG (104 aa)) is disordered.

This chain is Leucine-rich repeat-containing protein 71 (LRRC71), found in Homo sapiens (Human).